The primary structure comprises 26 residues: IRCQGSNQCYGHCREKTGCPNGKCID.

A disulfide bond links Cys-3 and Cys-24.

The protein belongs to the short scorpion toxin superfamily. Potassium channel inhibitor family. Alpha-KTx 06 subfamily. Expressed by the venom gland.

Its subcellular location is the secreted. Functionally, blocks voltage-gated potassium channels. This Opisthacanthus cayaporum (South American scorpion) protein is Potassium channel toxin alpha-KTx6 OcyKTx1.